Consider the following 339-residue polypeptide: Ketol-acid reductoisomerase (NADP(+)) (339 aa).

Residues 1–182 form the KARI N-terminal Rossmann domain; it reads MRVYYDRDAD…GGGRAGIIET (182 aa). NADP(+) contacts are provided by residues 24–27, Arg48, Ser51, Ser53, and 83–86; these read YGSQ and DELQ. His108 is an active-site residue. NADP(+) is bound at residue Gly134. Residues 183 to 328 form the KARI C-terminal knotted domain; that stretch reads SFREETETDL…ARLRDMMPWI (146 aa). Positions 191, 195, 227, and 231 each coordinate Mg(2+). Ser252 contacts substrate.

Belongs to the ketol-acid reductoisomerase family. Mg(2+) is required as a cofactor.

The catalysed reaction is (2R)-2,3-dihydroxy-3-methylbutanoate + NADP(+) = (2S)-2-acetolactate + NADPH + H(+). It catalyses the reaction (2R,3R)-2,3-dihydroxy-3-methylpentanoate + NADP(+) = (S)-2-ethyl-2-hydroxy-3-oxobutanoate + NADPH + H(+). Its pathway is amino-acid biosynthesis; L-isoleucine biosynthesis; L-isoleucine from 2-oxobutanoate: step 2/4. It functions in the pathway amino-acid biosynthesis; L-valine biosynthesis; L-valine from pyruvate: step 2/4. Functionally, involved in the biosynthesis of branched-chain amino acids (BCAA). Catalyzes an alkyl-migration followed by a ketol-acid reduction of (S)-2-acetolactate (S2AL) to yield (R)-2,3-dihydroxy-isovalerate. In the isomerase reaction, S2AL is rearranged via a Mg-dependent methyl migration to produce 3-hydroxy-3-methyl-2-ketobutyrate (HMKB). In the reductase reaction, this 2-ketoacid undergoes a metal-dependent reduction by NADPH to yield (R)-2,3-dihydroxy-isovalerate. In Afipia carboxidovorans (strain ATCC 49405 / DSM 1227 / KCTC 32145 / OM5) (Oligotropha carboxidovorans), this protein is Ketol-acid reductoisomerase (NADP(+)).